We begin with the raw amino-acid sequence, 247 residues long: 3-deoxy-manno-octulosonate cytidylyltransferase (247 aa).

Belongs to the KdsB family.

The protein localises to the cytoplasm. The catalysed reaction is 3-deoxy-alpha-D-manno-oct-2-ulosonate + CTP = CMP-3-deoxy-beta-D-manno-octulosonate + diphosphate. Its pathway is nucleotide-sugar biosynthesis; CMP-3-deoxy-D-manno-octulosonate biosynthesis; CMP-3-deoxy-D-manno-octulosonate from 3-deoxy-D-manno-octulosonate and CTP: step 1/1. It functions in the pathway bacterial outer membrane biogenesis; lipopolysaccharide biosynthesis. Functionally, activates KDO (a required 8-carbon sugar) for incorporation into bacterial lipopolysaccharide in Gram-negative bacteria. In Chlorobium phaeovibrioides (strain DSM 265 / 1930) (Prosthecochloris vibrioformis (strain DSM 265)), this protein is 3-deoxy-manno-octulosonate cytidylyltransferase.